The chain runs to 383 residues: MTATEALLRVLLLLLAFGHSTYGAECFPACNPQNGFCEDDNVCRCQPGWQGPLCDQCVTSPGCLHGLCGEPGQCICTDGWDGELCDRDVRACSSAPCANNRTCVSLDDGLYECSCAPGYSGKDCQKKDGPCVINGSPCQHGGTCVDDEGRASHASCLCPPGFSGNFCEIVANSCTPNPCENDGVCTDIGGDFRCRCPAGFIDKTCSRPVTNCASSPCQNGGTCLQHTQVSYECLCKPEFTGLTCVKKRALSPQQVTRLPSGYGLAYRLTPGVHELPVQQPEHRILKVSMKELNKKTPLLTEGQAICFTILGVLTSLVVLGTVGIVFLNKCETWVSNLRYNHMLRKKKNLLLQYNSGEDLAVNIIFPEKIDMTTFSKEAGDEEI.

A signal peptide spans 1 to 23 (MTATEALLRVLLLLLAFGHSTYG). 6 consecutive EGF-like domains span residues 24–55 (AECF…PLCD), 53–86 (LCDQ…ELCD), 88–125 (DVRA…KDCQ), 127–168 (KDGP…NFCE), 170–206 (VANS…KTCS), and 208–245 (PVTN…LTCV). The Extracellular segment spans residues 24–303 (AECFPACNPQ…KKTPLLTEGQ (280 aa)). Disulfide bonds link Cys26/Cys37, Cys30/Cys43, Cys45/Cys54, Cys57/Cys68, Cys63/Cys74, Cys76/Cys85, Cys92/Cys103, Cys97/Cys113, Cys115/Cys124, Cys131/Cys144, Cys138/Cys156, and Cys158/Cys167. The O-linked (GalNAc...) serine glycan is linked to Ser94. Asn100 is a glycosylation site (N-linked (GlcNAc...) asparagine). The O-linked (GalNAc...) threonine glycan is linked to Thr143. O-linked (GalNAc...) serine; partial glycosylation is present at Ser163. Residues Asn165 and Asn172 are each glycosylated (N-linked (GlcNAc...) asparagine; atypical; partial). Cystine bridges form between Cys174-Cys185, Cys179-Cys194, Cys196-Cys205, Cys212-Cys223, Cys217-Cys233, and Cys235-Cys244. O-linked (GalNAc...) serine glycosylation is present at Ser214. Thr222 carries an O-linked (GalNAc...) threonine; partial glycan. O-linked (GalNAc...) serine; partial glycosylation occurs at Ser251. Thr256 is a glycosylation site (O-linked (GalNAc...) threonine). An O-linked (GalNAc...) serine; partial glycan is attached at Ser260. Residues 304 to 327 (AICFTILGVLTSLVVLGTVGIVFL) traverse the membrane as a helical segment. The Cytoplasmic portion of the chain corresponds to 328-383 (NKCETWVSNLRYNHMLRKKKNLLLQYNSGEDLAVNIIFPEKIDMTTFSKEAGDEEI).

Monomer. Interacts with SH3RF2. In terms of processing, N- and O-glycosylated. O-glycosylated with core 1 or possibly core 8 glycans. Found within the stromal cells in close contact to the vascular structure of placental villi, yolk sac, fetal liver, adrenal cortex and pancreas and in the beta cells of the islets of Langerhans in the adult pancreas. Found also in some forms of neuroendocrine lung tumor tissue.

It localises to the membrane. The protein localises to the cytoplasm. Its function is as follows. May have a role in neuroendocrine differentiation. This chain is Protein delta homolog 1 (DLK1), found in Homo sapiens (Human).